Here is a 592-residue protein sequence, read N- to C-terminus: Arginine--tRNA ligase (592 aa).

A 'HIGH' region motif is present at residues 134-144 (ANPTGPLHVGH).

It belongs to the class-I aminoacyl-tRNA synthetase family. In terms of assembly, monomer.

Its subcellular location is the cytoplasm. It catalyses the reaction tRNA(Arg) + L-arginine + ATP = L-arginyl-tRNA(Arg) + AMP + diphosphate. The protein is Arginine--tRNA ligase of Coxiella burnetii (strain RSA 493 / Nine Mile phase I).